Here is a 488-residue protein sequence, read N- to C-terminus: Cytochrome P450 71A24 (488 aa).

Residues 3–23 form a helical membrane-spanning segment; the sequence is MMMMIILLLCSIILITILFFK. Heme is bound at residue cysteine 433.

This sequence belongs to the cytochrome P450 family. It depends on heme as a cofactor.

Its subcellular location is the membrane. This chain is Cytochrome P450 71A24 (CYP71A24), found in Arabidopsis thaliana (Mouse-ear cress).